Here is a 321-residue protein sequence, read N- to C-terminus: S-methyl-5'-thioadenosine phosphorylase (321 aa).

Residues T30, 73–74 (RH), and 106–107 (SA) each bind phosphate. Residue M215 participates in substrate binding. S216 is a phosphate binding site. Residue 239-241 (DYD) coordinates substrate.

This sequence belongs to the PNP/MTAP phosphorylase family. MTAP subfamily. Homotrimer.

It is found in the cytoplasm. Its subcellular location is the nucleus. It carries out the reaction S-methyl-5'-thioadenosine + phosphate = 5-(methylsulfanyl)-alpha-D-ribose 1-phosphate + adenine. Its pathway is amino-acid biosynthesis; L-methionine biosynthesis via salvage pathway; S-methyl-5-thio-alpha-D-ribose 1-phosphate from S-methyl-5'-thioadenosine (phosphorylase route): step 1/1. Functionally, catalyzes the reversible phosphorylation of S-methyl-5'-thioadenosine (MTA) to adenine and 5-methylthioribose-1-phosphate. Involved in the breakdown of MTA, a major by-product of polyamine biosynthesis. Responsible for the first step in the methionine salvage pathway after MTA has been generated from S-adenosylmethionine. Has broad substrate specificity with 6-aminopurine nucleosides as preferred substrates. The polypeptide is S-methyl-5'-thioadenosine phosphorylase (Yarrowia lipolytica (strain CLIB 122 / E 150) (Yeast)).